Here is a 999-residue protein sequence, read N- to C-terminus: Sarcoplasmic/endoplasmic reticulum calcium ATPase 3 (999 aa).

The residue at position 1 (Met-1) is an N-acetylmethionine. Topologically, residues Met-1–Ser-48 are cytoplasmic. Ser-17 bears the Phosphoserine mark. Thr-19 carries the post-translational modification Phosphothreonine. A helical transmembrane segment spans residues Leu-49–Ala-69. At Leu-70–Val-89 the chain is on the lumenal side. Residues Glu-90–Arg-110 form a helical membrane-spanning segment. Residues Asn-111 to Leu-253 lie on the Cytoplasmic side of the membrane. Residues Asp-254–Val-273 traverse the membrane as a helical segment. The Lumenal portion of the chain corresponds to Ile-274 to Tyr-295. A helical transmembrane segment spans residues Phe-296–Ala-313. Ca(2+)-binding residues include Val-304, Ala-305, Ile-307, and Glu-309. At Val-314–Met-757 the chain is on the cytoplasmic side. The active-site 4-aspartylphosphate intermediate is the Asp-351. Residues Asp-351 and Thr-353 each coordinate Mg(2+). Thr-353 provides a ligand contact to ATP. The segment at Ala-370–Gln-400 is interaction with phospholamban 1. Thr-415 is subject to Phosphothreonine. Positions 442, 489, 515, 560, 625, 626, and 627 each coordinate ATP. At Ser-662 the chain carries Phosphoserine. Residues Arg-678 and Lys-684 each coordinate ATP. Asp-703 lines the Mg(2+) pocket. Asn-706 is a binding site for ATP. A helical membrane pass occupies residues Lys-758 to Leu-777. The Ca(2+) site is built by Asn-768 and Glu-771. At Thr-778 to Leu-787 the chain is on the lumenal side. A helical membrane pass occupies residues Ile-788–Gly-808. The interaction with phospholamban 2 stretch occupies residues Ile-788–Gly-808. Ca(2+)-binding residues include Asn-796, Thr-799, and Asp-800. Over Phe-809–Leu-828 the chain is Cytoplasmic. Residues Ile-829–Ala-851 form a helical membrane-spanning segment. Residues Ala-852–Thr-897 lie on the Lumenal side of the membrane. Residues Thr-898–Ser-917 form a helical membrane-spanning segment. Glu-908 provides a ligand contact to Ca(2+). At Glu-918 to Asn-930 the chain is on the cytoplasmic side. A helical membrane pass occupies residues Pro-931–Leu-949. Residues Val-950–Gly-964 are Lumenal-facing. Residues Arg-965–Lys-985 traverse the membrane as a helical segment. Residues Tyr-986 to Lys-999 lie on the Cytoplasmic side of the membrane.

It belongs to the cation transport ATPase (P-type) (TC 3.A.3) family. Type IIA subfamily. As to quaternary structure, interacts with sarcolipin (SLN). Interacts with phospholamban (PLN). Interacts with myoregulin (MRLN). Interacts with DWORF. Interacts with VMP1. Interacts with TUNAR; the interaction occurs at low levels in low glucose conditions and is increased by high glucose levels. Requires Mg(2+) as cofactor. Found in most tissues. Most abundant in large and small intestine, spleen and lung. Also detected in PC12 cells.

It localises to the endoplasmic reticulum membrane. It is found in the sarcoplasmic reticulum membrane. The enzyme catalyses Ca(2+)(in) + ATP + H2O = Ca(2+)(out) + ADP + phosphate + H(+). Its activity is regulated as follows. Inhibited by sarcolipin (SLN), phospholamban (PLN) and myoregulin (MRLN). Enhanced by DWORF; DWORF increases activity by displacing sarcolipin (SLN), phospholamban (PLN) and myoregulin (MRLN). This magnesium-dependent enzyme catalyzes the hydrolysis of ATP coupled with the transport of the calcium. Transports calcium ions from the cytosol into the sarcoplasmic/endoplasmic reticulum lumen. Contributes to calcium sequestration involved in muscular excitation/contraction. In terms of biological role, this magnesium-dependent enzyme catalyzes the hydrolysis of ATP coupled with the transport of calcium. Transports calcium ions from the cytosol into the sarcoplasmic/endoplasmic reticulum lumen. Contributes to calcium sequestration involved in muscular excitation/contraction. This chain is Sarcoplasmic/endoplasmic reticulum calcium ATPase 3 (Atp2a3), found in Rattus norvegicus (Rat).